The following is a 221-amino-acid chain: Very-long-chain (3R)-3-hydroxyacyl-CoA dehydratase PASTICCINO 2B (221 aa).

Over 1 to 11 the chain is Cytoplasmic; it reads MTGVGSAVRRL. The helical transmembrane segment at 12 to 32 threads the bilayer; that stretch reads YLSVYNWAVFFGWAQVLYYAV. Topologically, residues 33–51 are lumenal; it reads TTLLESGHEAVYAAVERPL. A helical membrane pass occupies residues 52-70; that stretch reads QFAQTAAFLEILHGLVGLV. Topologically, residues 71–76 are cytoplasmic; sequence RSPVSA. Residues 77–95 traverse the membrane as a helical segment; that stretch reads TLPQIGSRLFLTWGILWSF. Residues 96–100 are Lumenal-facing; that stretch reads PETHS. Residues 101–121 form a helical membrane-spanning segment; sequence HILVTSLVISWSITEIIRYSF. Residues 122–141 are Cytoplasmic-facing; it reads FGMKETFGFAPSWLLWLRYS. A helical transmembrane segment spans residues 142 to 165; sequence TFMVLYPTGISSEVGLIYIALPYM. Catalysis depends on residues tyrosine 147 and glutamate 154. Topologically, residues 166–184 are lumenal; that stretch reads KATEKYCLRMPNKWNFSFD. The helical transmembrane segment at 185-209 threads the bilayer; sequence FSYASILSLAVYVPGSPHMFTYMLA. Residues 210–221 are Cytoplasmic-facing; it reads QRKKALAKAKAA.

Belongs to the very long-chain fatty acids dehydratase HACD family.

It is found in the endoplasmic reticulum membrane. It carries out the reaction a very-long-chain (3R)-3-hydroxyacyl-CoA = a very-long-chain (2E)-enoyl-CoA + H2O. It functions in the pathway lipid metabolism; fatty acid biosynthesis. Functionally, catalyzes the third of the four reactions of the long-chain fatty acids elongation cycle. This endoplasmic reticulum-bound enzymatic process, allows the addition of two carbons to the chain of long- and very long-chain fatty acids/VLCFAs per cycle. This enzyme catalyzes the dehydration of the 3-hydroxyacyl-CoA intermediate into trans-2,3-enoyl-CoA, within each cycle of fatty acid elongation. Thereby, it participates in the production of VLCFAs of different chain lengths that are involved in multiple biological processes as precursors of membrane lipids and lipid mediators. May be an anti-phosphatase that prevents CDKA-1 dephosphorylation and activation. Involved in the hormonal control of cell division and differentiation. Required for proliferation control of meristematic and non-meristematic cells. Negative regulator of the cell cycle. This Oryza sativa subsp. japonica (Rice) protein is Very-long-chain (3R)-3-hydroxyacyl-CoA dehydratase PASTICCINO 2B (PAS2B).